Here is a 354-residue protein sequence, read N- to C-terminus: Protein ECM8 (354 aa).

Functionally, may be involved in cell wall organization and biogenesis. The sequence is that of Protein ECM8 (ECM8) from Saccharomyces cerevisiae (strain ATCC 204508 / S288c) (Baker's yeast).